The sequence spans 953 residues: 26S proteasome non-ATPase regulatory subunit 1 (953 aa).

N-acetylmethionine is present on M1. T273 bears the Phosphothreonine mark. Residues 277 to 319 (SVPGSTNTGTVPGPEKDSDSMETEEKTAGAVAGKTPDASPEPK) form a disordered region. The segment covering 290–303 (PEKDSDSMETEEKT) has biased composition (basic and acidic residues). K310 bears the N6-acetyllysine mark. T311 carries the phosphothreonine modification. Residue S315 is modified to Phosphoserine. PC repeat units follow at residues 403–436 (TATASLGVIHKGHEKEALQLMATYLPKDTSPGSA), 441–474 (GGLYALGLIHANHGGDIIDYLLNQLKNASNDIVR), 476–510 (GGSLGLGLAAMGTARQDVYDLLKTNLYQDDAVTGE), 511–545 (AAGLALGLVMLGSKNTQAIEDMVGYAQETQHEKIL), 547–580 (GLAVGIALVMYGRMEEADALIESLCRDKDPILRR), 581–616 (SGMYTVAMAYCGSGNNKAIRRLLHVAVSDVNDDVRR), 617–649 (AAVESLGFILFRTPEQCPSVVSLLSESYNPHVR), 651–685 (GAAMALGVCCAGTGNKEAINLLEPMTNDPVNYVRQ), 686–726 (GALI…DVMA), and 729–761 (GAILAQGILDAGGHNVTISLQSRTGHTHMPSVV). The residue at position 720 (K720) is an N6-acetyllysine. The residue at position 830 (T830) is a Phosphothreonine. S834 is modified (phosphoserine). 2 disordered regions span residues 839 to 881 (AKKK…LDNP) and 930 to 953 (AHGPKIEEEEQEPEPPEPFEYIDD). Composition is skewed to basic and acidic residues over residues 842–852 (KEKEKEKKEEE) and 859–872 (AEKKEEKEKKKEPE). The span at 936–953 (EEEEQEPEPPEPFEYIDD) shows a compositional bias: acidic residues.

Belongs to the proteasome subunit S1 family. As to quaternary structure, component of the 19S proteasome regulatory particle complex. The 26S proteasome consists of a 20S core particle (CP) and two 19S regulatory subunits (RP). The regulatory particle is made of a lid composed of 9 subunits, a base containing 6 ATPases and few additional components including PSMD1. Interacts with ADRM1. Interacts with ZFAND1.

Component of the 26S proteasome, a multiprotein complex involved in the ATP-dependent degradation of ubiquitinated proteins. This complex plays a key role in the maintenance of protein homeostasis by removing misfolded or damaged proteins, which could impair cellular functions, and by removing proteins whose functions are no longer required. Therefore, the proteasome participates in numerous cellular processes, including cell cycle progression, apoptosis, or DNA damage repair. The sequence is that of 26S proteasome non-ATPase regulatory subunit 1 (Psmd1) from Rattus norvegicus (Rat).